The chain runs to 144 residues: Large ribosomal subunit protein uL15 (144 aa).

Residues 1–53 (MYLNTLAPAEGAKHSAKRLGRGIGSGLGKTGGRGHKGQKSRTGGGVRRGFEGG) are disordered. Residues 21-31 (RGIGSGLGKTG) are compositionally biased toward gly residues.

It belongs to the universal ribosomal protein uL15 family. As to quaternary structure, part of the 50S ribosomal subunit.

In terms of biological role, binds to the 23S rRNA. In Mannheimia succiniciproducens (strain KCTC 0769BP / MBEL55E), this protein is Large ribosomal subunit protein uL15.